Consider the following 506-residue polypeptide: Lysine--tRNA ligase (506 aa).

2 residues coordinate Mg(2+): Glu-415 and Glu-422.

The protein belongs to the class-II aminoacyl-tRNA synthetase family. In terms of assembly, homodimer. Mg(2+) serves as cofactor.

It is found in the cytoplasm. The catalysed reaction is tRNA(Lys) + L-lysine + ATP = L-lysyl-tRNA(Lys) + AMP + diphosphate. This chain is Lysine--tRNA ligase (lysS), found in Buchnera aphidicola subsp. Acyrthosiphon pisum (strain APS) (Acyrthosiphon pisum symbiotic bacterium).